The following is a 365-amino-acid chain: Putative glutamate--cysteine ligase 2-3 (365 aa).

The protein belongs to the glutamate--cysteine ligase type 2 family. YbdK subfamily.

The catalysed reaction is L-cysteine + L-glutamate + ATP = gamma-L-glutamyl-L-cysteine + ADP + phosphate + H(+). Functionally, ATP-dependent carboxylate-amine ligase which exhibits weak glutamate--cysteine ligase activity. This chain is Putative glutamate--cysteine ligase 2-3, found in Mycolicibacterium smegmatis (strain ATCC 700084 / mc(2)155) (Mycobacterium smegmatis).